The primary structure comprises 168 residues: Photosystem I assembly protein Ycf3 (168 aa).

3 TPR repeats span residues 35–68 (AFTY…EIDP), 72–105 (SYIL…NPFL), and 120–153 (GEQA…TPGN).

Belongs to the Ycf3 family.

Its subcellular location is the plastid. It is found in the chloroplast thylakoid membrane. Functionally, essential for the assembly of the photosystem I (PSI) complex. May act as a chaperone-like factor to guide the assembly of the PSI subunits. In Buxus microphylla (Littleleaf boxwood), this protein is Photosystem I assembly protein Ycf3.